The primary structure comprises 339 residues: Ketol-acid reductoisomerase (NADP(+)) (339 aa).

In terms of domain architecture, KARI N-terminal Rossmann spans 1 to 182 (MRVYYDRDAD…GGGRSGVIET (182 aa)). Residues 24 to 27 (YGSQ), R48, S51, T53, and 83 to 86 (DEHQ) contribute to the NADP(+) site. Residue H108 is part of the active site. G134 contacts NADP(+). One can recognise a KARI C-terminal knotted domain in the interval 183-328 (TFKEECETDL…AELRAMMPWI (146 aa)). Mg(2+)-binding residues include D191, E195, E227, and E231. S252 lines the substrate pocket.

It belongs to the ketol-acid reductoisomerase family. Mg(2+) is required as a cofactor.

It carries out the reaction (2R)-2,3-dihydroxy-3-methylbutanoate + NADP(+) = (2S)-2-acetolactate + NADPH + H(+). The enzyme catalyses (2R,3R)-2,3-dihydroxy-3-methylpentanoate + NADP(+) = (S)-2-ethyl-2-hydroxy-3-oxobutanoate + NADPH + H(+). It functions in the pathway amino-acid biosynthesis; L-isoleucine biosynthesis; L-isoleucine from 2-oxobutanoate: step 2/4. Its pathway is amino-acid biosynthesis; L-valine biosynthesis; L-valine from pyruvate: step 2/4. In terms of biological role, involved in the biosynthesis of branched-chain amino acids (BCAA). Catalyzes an alkyl-migration followed by a ketol-acid reduction of (S)-2-acetolactate (S2AL) to yield (R)-2,3-dihydroxy-isovalerate. In the isomerase reaction, S2AL is rearranged via a Mg-dependent methyl migration to produce 3-hydroxy-3-methyl-2-ketobutyrate (HMKB). In the reductase reaction, this 2-ketoacid undergoes a metal-dependent reduction by NADPH to yield (R)-2,3-dihydroxy-isovalerate. This Rhizorhabdus wittichii (strain DSM 6014 / CCUG 31198 / JCM 15750 / NBRC 105917 / EY 4224 / RW1) (Sphingomonas wittichii) protein is Ketol-acid reductoisomerase (NADP(+)).